The primary structure comprises 95 residues: Sec-independent protein translocase protein TatA (95 aa).

Residues 1–21 (MGSMSVWHWVIVAVVVMLLFG) form a helical membrane-spanning segment. A disordered region spans residues 42 to 95 (GMADDETQPNTATSVPPVGPNDPVRTLPHQGAPGTAPQPPHVQPHVSAGDHKAV).

It belongs to the TatA/E family. In terms of assembly, the Tat system comprises two distinct complexes: a TatABC complex, containing multiple copies of TatA, TatB and TatC subunits, and a separate TatA complex, containing only TatA subunits. Substrates initially bind to the TatABC complex, which probably triggers association of the separate TatA complex to form the active translocon.

The protein localises to the cell inner membrane. Functionally, part of the twin-arginine translocation (Tat) system that transports large folded proteins containing a characteristic twin-arginine motif in their signal peptide across membranes. TatA could form the protein-conducting channel of the Tat system. This is Sec-independent protein translocase protein TatA from Methylorubrum extorquens (strain CM4 / NCIMB 13688) (Methylobacterium extorquens).